The following is a 565-amino-acid chain: NAD-dependent malic enzyme (565 aa).

Tyr-104 functions as the Proton donor in the catalytic mechanism. Position 157 (Arg-157) interacts with NAD(+). Catalysis depends on Lys-175, which acts as the Proton acceptor. Glu-246, Asp-247, and Asp-270 together coordinate a divalent metal cation. Asp-270 and Asn-418 together coordinate NAD(+).

Belongs to the malic enzymes family. As to quaternary structure, homotetramer. Mg(2+) is required as a cofactor. Requires Mn(2+) as cofactor.

It catalyses the reaction (S)-malate + NAD(+) = pyruvate + CO2 + NADH. The catalysed reaction is oxaloacetate + H(+) = pyruvate + CO2. In Salmonella arizonae (strain ATCC BAA-731 / CDC346-86 / RSK2980), this protein is NAD-dependent malic enzyme.